The sequence spans 522 residues: GMP synthase [glutamine-hydrolyzing] (522 aa).

The region spanning 5 to 204 (YILIIDFGSQ…VKNICNYTNV (200 aa)) is the Glutamine amidotransferase type-1 domain. The active-site Nucleophile is cysteine 82. Active-site residues include histidine 178 and glutamate 180. In terms of domain architecture, GMPS ATP-PPase spans 205-397 (IKYSLSIRKI…IGIPKEIIFR (193 aa)). Residue 232-238 (SGGIDSF) participates in ATP binding.

In terms of assembly, homodimer.

The catalysed reaction is XMP + L-glutamine + ATP + H2O = GMP + L-glutamate + AMP + diphosphate + 2 H(+). The protein operates within purine metabolism; GMP biosynthesis; GMP from XMP (L-Gln route): step 1/1. Functionally, catalyzes the synthesis of GMP from XMP. The polypeptide is GMP synthase [glutamine-hydrolyzing] (Wigglesworthia glossinidia brevipalpis).